The primary structure comprises 359 residues: Dual-specificity RNA methyltransferase RlmN (359 aa).

The Proton acceptor role is filled by Glu-86. In terms of domain architecture, Radical SAM core spans 105–338; the sequence is EGEKYTICVS…CTIRESKGID (234 aa). Cysteines 112 and 343 form a disulfide. [4Fe-4S] cluster contacts are provided by Cys-119, Cys-123, and Cys-126. S-adenosyl-L-methionine-binding positions include 169–170, Ser-201, 224–226, and Asn-300; these read GE and SLH. The S-methylcysteine intermediate role is filled by Cys-343.

The protein belongs to the radical SAM superfamily. RlmN family. The cofactor is [4Fe-4S] cluster.

Its subcellular location is the cytoplasm. The enzyme catalyses adenosine(2503) in 23S rRNA + 2 reduced [2Fe-2S]-[ferredoxin] + 2 S-adenosyl-L-methionine = 2-methyladenosine(2503) in 23S rRNA + 5'-deoxyadenosine + L-methionine + 2 oxidized [2Fe-2S]-[ferredoxin] + S-adenosyl-L-homocysteine. The catalysed reaction is adenosine(37) in tRNA + 2 reduced [2Fe-2S]-[ferredoxin] + 2 S-adenosyl-L-methionine = 2-methyladenosine(37) in tRNA + 5'-deoxyadenosine + L-methionine + 2 oxidized [2Fe-2S]-[ferredoxin] + S-adenosyl-L-homocysteine. Functionally, specifically methylates position 2 of adenine 2503 in 23S rRNA and position 2 of adenine 37 in tRNAs. m2A2503 modification seems to play a crucial role in the proofreading step occurring at the peptidyl transferase center and thus would serve to optimize ribosomal fidelity. This is Dual-specificity RNA methyltransferase RlmN from Wolinella succinogenes (strain ATCC 29543 / DSM 1740 / CCUG 13145 / JCM 31913 / LMG 7466 / NCTC 11488 / FDC 602W) (Vibrio succinogenes).